A 280-amino-acid chain; its full sequence is B3 domain-containing protein At5g25470 (280 aa).

The segment at residues 20-114 (WKSLSPGQNW…FLEVQIFKND (95 aa)) is a DNA-binding region (TF-B3 1). The tract at residues 122 to 153 (PPEVEPETEPFHPTTPKNSHKETTTASASASA) is disordered. Positions 183-276 (YFVKTLTKGN…ELVTAVRVHF (94 aa)) form a DNA-binding region, TF-B3 2.

It localises to the nucleus. This chain is B3 domain-containing protein At5g25470, found in Arabidopsis thaliana (Mouse-ear cress).